The sequence spans 138 residues: Ribulose bisphosphate carboxylase small subunit (138 aa).

The protein belongs to the RuBisCO small chain family. Heterohexadecamer of 8 large and 8 small subunits.

The protein resides in the plastid. It is found in the chloroplast. In terms of biological role, ruBisCO catalyzes two reactions: the carboxylation of D-ribulose 1,5-bisphosphate, the primary event in carbon dioxide fixation, as well as the oxidative fragmentation of the pentose substrate in the photorespiration process. Both reactions occur simultaneously and in competition at the same active site. Although the small subunit is not catalytic it is essential for maximal activity. In Porphyridium aerugineum (Red microalga), this protein is Ribulose bisphosphate carboxylase small subunit.